The primary structure comprises 369 residues: Phenylalanine--tRNA ligase alpha subunit (369 aa).

Glu269 contributes to the Mg(2+) binding site.

The protein belongs to the class-II aminoacyl-tRNA synthetase family. Phe-tRNA synthetase alpha subunit type 1 subfamily. As to quaternary structure, tetramer of two alpha and two beta subunits. Mg(2+) serves as cofactor.

The protein localises to the cytoplasm. The catalysed reaction is tRNA(Phe) + L-phenylalanine + ATP = L-phenylalanyl-tRNA(Phe) + AMP + diphosphate + H(+). This Brucella melitensis biotype 1 (strain ATCC 23456 / CCUG 17765 / NCTC 10094 / 16M) protein is Phenylalanine--tRNA ligase alpha subunit.